A 236-amino-acid chain; its full sequence is DNA repair protein RecO (236 aa).

Belongs to the RecO family.

Functionally, involved in DNA repair and RecF pathway recombination. The protein is DNA repair protein RecO of Photobacterium profundum (strain SS9).